A 302-amino-acid chain; its full sequence is MSSPELPSQMGVPNGHTKLQEVTPDTPLDEVFQKWEEDGGVIIKGILAPAQVTQLREELQPLLDTFQRGSTTDIEPLKRFHGSQTKRAGGLTNCSAIFRDYLLDNDFLHAIAARCFGSGGRPGVHAYWISSANTINVGPGQPAQVLHRDLGNYPHYHLLGPDGPESQATFLIATTDFTDANGATRIIPGSQKWPFNQTWNPSQSIPSEMHAGDCLLFGGKVVHGTGANTTNAERGCVAFTFCANHLTPEEAHPHIVDINIVRKLSERAQRSLGFRSQYPRGAPGLWMEGYNEVATRLGLDSK.

Residues 1–22 are disordered; that stretch reads MSSPELPSQMGVPNGHTKLQEV. Fe cation is bound by residues His-147, Asp-149, and His-223.

The protein belongs to the PhyH family. As to quaternary structure, homodimer. Requires Fe cation as cofactor.

Its pathway is mycotoxin biosynthesis. Its function is as follows. Dioxygenase; part of the gene cluster that mediates the biosynthesis of the host-selective toxins (HSTs) AAL-toxins, sphinganine-analog mycotoxins responsible for Alternaria stem canker on tomato by the tomato pathotype. The biosynthesis starts with the polyketide synthase ALT1-catalyzed C-16 carbon chain assembly from one starter acetyl-CoA unit with malonyl-CoA extender units. ALT1 also selectively transfers methyl groups at the first and the third cycle of chain elongation for AAL toxin. The C-16 polyketide chain is released from the enzyme by a nucleophilic attack of a carbanion, which is derived from R-carbon of glycin by decarboxylation, on the carbonyl carbon of polyketide acyl chain. This step is probably catalyzed by a pyridoxal 5'-phosphate-dependent aminoacyl transferase ALT4. The respective functions of the other enzymes encoded by the cluster have still to be elucidated. The sphingosine N-acyltransferase-like protein ALT7 seems not to act as a resistance/self-tolerance factor against the toxin in the toxin biosynthetic gene cluster, contrary to what is expected. The protein is Dioxygenase ALT11 of Alternaria alternata (Alternaria rot fungus).